Here is a 281-residue protein sequence, read N- to C-terminus: Protein NipSnap homolog 2 (281 aa).

The transit peptide at 1 to 27 (MAARVLLARGGLLRPAAQSAFLPGLRT) directs the protein to the mitochondrion.

This sequence belongs to the NipSnap family. Interacts with CALCOCO2/NDP52, NBR1, SQSTM1/p62, TAX1BP1 and WDFY3/ALFY. Interacts with ATG8 family proteins (MAP1LC3A, MAP1LC3B, MAP1LC3C, GABARAP, GABARAPL1 and GABARAPL2). Interacts with VDAC1.

It localises to the mitochondrion matrix. It is found in the cytoplasm. Functionally, protein involved in mitophagy by facilitating recruitment of the autophagy machinery required for clearance of damaged mitochondria. Accumulates on the mitochondria surface in response to mitochondrial depolarization and acts as a 'eat me' signal by recruiting proteins involved in selective autophagy, such as autophagy receptors (CALCOCO2/NDP52, NBR1, SQSTM1/p62, TAX1BP1 and WDFY3/ALFY) and ATG8 family proteins (MAP1LC3A, MAP1LC3B, MAP1LC3C, GABARAP, GABARAPL1 and GABARAPL2). May act as a positive regulator of L-type calcium channels. The protein is Protein NipSnap homolog 2 of Mus musculus (Mouse).